The following is a 557-amino-acid chain: E3 ubiquitin-protein ligase ARIH1 (557 aa).

Over residues 1–47 (MDSDEGYNYEFDEDEECSEEDSGAEEEEDEDDDEPDDDTLDLGEVEL) the composition is skewed to acidic residues. A disordered region spans residues 1–95 (MDSDEGYNYE…GGGGGPGHEQ (95 aa)). Gly residues predominate over residues 65 to 92 (ETGGGGGSALGPGGGGGGGGGGGGGGPG). A UBA-like region spans residues 105-153 (TAEQILQHMVECIREVNEVIQNPATITRILLSHFNWDKEKLMERYFDGN). Lys-142 carries the post-translational modification N6-acetyllysine. Residues 182–393 (QDMPCQICYL…SAWYNCNRYN (212 aa)) are TRIAD supradomain. Cys-186, Cys-189, Cys-203, His-205, Cys-208, Cys-211, Cys-231, Cys-236, Cys-276, Cys-281, Cys-297, Cys-299, Cys-304, Cys-307, His-312, Cys-317, Cys-344, and Cys-347 together coordinate Zn(2+). The segment at 186-236 (CQICYLNYPNSYFTGLECGHKFCMQCWSEYLTTKIMEEGMGQTISCPAHGC) adopts an RING-type 1 zinc-finger fold. The segment at 256 to 317 (LKYQHLITNS…GENWHDPVKC (62 aa)) adopts an IBR-type zinc-finger fold. Residues 344 to 375 (CPKCHVTIEKDGGCNHMVCRNQNCKAEFCWVC) form an RING-type 2; atypical zinc finger. Residue Cys-357 is part of the active site. 6 residues coordinate Zn(2+): Cys-362, Cys-367, Cys-372, Cys-375, His-382, and Cys-389. The interval 408-557 (RAALQRYLFY…EKDLWEYIED (150 aa)) is ariadne domain.

This sequence belongs to the RBR family. Ariadne subfamily. Interacts (via the first RING-type zinc finger) with UBE2L3. Associates with cullin-RING ubiquitin ligase (CRL) complexes containing CUL1, CUL2 and CUL3. Interacts with neddylated CUL1. Interacts with neddylated CUL2. Interacts with neddylated CUL3. Interacts with neddylated CUL4A. In terms of tissue distribution, widely expressed.

It localises to the cytoplasm. It is found in the nucleus. The protein resides in the cajal body. The catalysed reaction is [E2 ubiquitin-conjugating enzyme]-S-ubiquitinyl-L-cysteine + [acceptor protein]-L-lysine = [E2 ubiquitin-conjugating enzyme]-L-cysteine + [acceptor protein]-N(6)-ubiquitinyl-L-lysine.. Its pathway is protein modification; protein ubiquitination. With respect to regulation, autoinhibited by the ariadne domain, which masks the second RING-type zinc finger that contains the active site and inhibits the E3 activity. Inhibition is relieved upon binding to neddylated cullin-RING ubiquitin ligase complexes, which activate the E3 ligase activity of ARIH1. Functionally, E3 ubiquitin-protein ligase, which catalyzes ubiquitination of target proteins together with ubiquitin-conjugating enzyme E2 UBE2L3. Acts as an atypical E3 ubiquitin-protein ligase by working together with cullin-RING ubiquitin ligase (CRL) complexes and initiating ubiquitination of CRL substrates: associates with CRL complexes and specifically mediates addition of the first ubiquitin on CRLs targets. The initial ubiquitin is then elongated by CDC34/UBE2R1 and UBE2R2. E3 ubiquitin-protein ligase activity is activated upon binding to neddylated cullin-RING ubiquitin ligase complexes. Plays a role in protein translation in response to DNA damage by mediating ubiquitination of EIF4E2, the consequences of EIF4E2 ubiquitination are however unclear. According to a report, EIF4E2 ubiquitination leads to promote EIF4E2 cap-binding and protein translation arrest. According to another report EIF4E2 ubiquitination leads to its subsequent degradation. Acts as the ligase involved in ISGylation of EIF4E2. In vitro, controls the degradation of the LINC (LInker of Nucleoskeleton and Cytoskeleton) complex member SUN2 and may therefore have a role in the formation and localization of the LINC complex, and as a consequence, nuclear subcellular localization and nuclear morphology. This Homo sapiens (Human) protein is E3 ubiquitin-protein ligase ARIH1.